Consider the following 271-residue polypeptide: Formamidopyrimidine-DNA glycosylase (271 aa).

The Schiff-base intermediate with DNA role is filled by proline 2. Glutamate 3 serves as the catalytic Proton donor. Lysine 57 (proton donor; for beta-elimination activity) is an active-site residue. Residues histidine 90, arginine 109, and lysine 151 each contribute to the DNA site. An FPG-type zinc finger spans residues 236 to 270 (HVYGRGGETCTQCGNLLSEIKLGQRATVFCGLCQP). Arginine 260 serves as the catalytic Proton donor; for delta-elimination activity.

It belongs to the FPG family. As to quaternary structure, monomer. It depends on Zn(2+) as a cofactor.

The catalysed reaction is Hydrolysis of DNA containing ring-opened 7-methylguanine residues, releasing 2,6-diamino-4-hydroxy-5-(N-methyl)formamidopyrimidine.. It catalyses the reaction 2'-deoxyribonucleotide-(2'-deoxyribose 5'-phosphate)-2'-deoxyribonucleotide-DNA = a 3'-end 2'-deoxyribonucleotide-(2,3-dehydro-2,3-deoxyribose 5'-phosphate)-DNA + a 5'-end 5'-phospho-2'-deoxyribonucleoside-DNA + H(+). In terms of biological role, involved in base excision repair of DNA damaged by oxidation or by mutagenic agents. Acts as a DNA glycosylase that recognizes and removes damaged bases. Has a preference for oxidized purines, such as 7,8-dihydro-8-oxoguanine (8-oxoG). Has AP (apurinic/apyrimidinic) lyase activity and introduces nicks in the DNA strand. Cleaves the DNA backbone by beta-delta elimination to generate a single-strand break at the site of the removed base with both 3'- and 5'-phosphates. This chain is Formamidopyrimidine-DNA glycosylase, found in Shewanella loihica (strain ATCC BAA-1088 / PV-4).